A 242-amino-acid polypeptide reads, in one-letter code: Small ribosomal subunit protein uS2 (242 aa).

The protein belongs to the universal ribosomal protein uS2 family.

The protein is Small ribosomal subunit protein uS2 of Aeromonas hydrophila subsp. hydrophila (strain ATCC 7966 / DSM 30187 / BCRC 13018 / CCUG 14551 / JCM 1027 / KCTC 2358 / NCIMB 9240 / NCTC 8049).